The following is a 348-amino-acid chain: MAVYFVTGKLGSGKTLVSVGKIQDKIVAGCKIATNLDLRLQNLPQVGRFAKTPRVLRIPDKPSISDLLAIGRGNDSYDENKNGLLVLDECGTWFNTRSWNDKERQPIIDWFLHARKLGWDIIFLVQDLSIVDKQARSALAEHVVYCRRLDRITLPFVGTLYSLITGSKMPLPKLHVGVVKYGDSQLSPTVERWLYTGKNLYNAYDTKQAFSSNYDSGVYSYLTPYLSHGRYFKPLNLGQKMKLTKIYLKKFSRVLCLAIGFASAFTYSYITQPKPEVKKVVSQTYDFDKFTIDSSQRLNLSYRYVFKDSKGKLINSDDLQKQGYSLTYIDLCTVSIKKGNSNEIVKCN.

ATP is bound at residue 8–15 (GKLGSGKT). A helical transmembrane segment spans residues 254–270 (VLCLAIGFASAFTYSYI).

It belongs to the inovirus G1P protein family. Interacts with G4P; this interaction results in a complex that spans the inner an outer host membranes.

Its subcellular location is the host membrane. Functionally, isoform G1P plays an essential role in phage assembly. It is required to increase the number of adhesion zones between the inner and outer membranes of the host cell. The extrusion of neo-synthesized phages occurs at these adhesion sites. May be involved with G4P in creating zone through which the phage assembled and extruded. Its function is as follows. Isoform G11P is also involved in phage assembly, probably playing a structural role in the formation of the phage assembly site. The chain is Gene 1 protein (I) from Escherichia coli (Bacteriophage M13).